Consider the following 296-residue polypeptide: Glycine--tRNA ligase alpha subunit (296 aa).

This sequence belongs to the class-II aminoacyl-tRNA synthetase family. As to quaternary structure, tetramer of two alpha and two beta subunits.

It is found in the cytoplasm. It carries out the reaction tRNA(Gly) + glycine + ATP = glycyl-tRNA(Gly) + AMP + diphosphate. In Listeria innocua serovar 6a (strain ATCC BAA-680 / CLIP 11262), this protein is Glycine--tRNA ligase alpha subunit.